Here is a 109-residue protein sequence, read N- to C-terminus: Immunity protein CdiI (109 aa).

As to quaternary structure, specifically interacts with cognate toxin CdiA, which inhibits the toxin.

Immunity protein component of a toxin-immunity protein module, which functions as a cellular contact-dependent growth inhibition (CDI) system. CDI modules allow bacteria to communicate with and inhibit the growth of closely related neighboring bacteria in a contact-dependent fashion. Neutralizes the toxic activity of cognate toxin CdiA (C-terminal 160 residue CT fragment) upon expression in E.coli. Does not inhibit toxic activity of CdiA from other strains of B.pseudomallei. The polypeptide is Immunity protein CdiI (cdiI) (Burkholderia pseudomallei (Pseudomonas pseudomallei)).